We begin with the raw amino-acid sequence, 241 residues long: Cobalt transport protein CbiM (241 aa).

An N-terminal signal peptide occupies residues 1 to 23 (MKKNLTFFMVIALLFTITPNVYA). 6 helical membrane-spanning segments follow: residues 29–49 (GFLP…FIII), 66–86 (MLLG…IPSV), 98–118 (LSAI…VLIF), 121–141 (ILLA…MGIM), 160–180 (VAVF…TSVQ), and 202–222 (IFSI…VIIF).

The protein belongs to the CbiM family. In terms of assembly, forms an energy-coupling factor (ECF) transporter complex composed of an ATP-binding protein (A component, CbiO), a transmembrane protein (T component, CbiQ) and 2 possible substrate-capture proteins (S components, CbiM and CbiN) of unknown stoichimetry.

The protein resides in the cell membrane. It functions in the pathway cofactor biosynthesis; adenosylcobalamin biosynthesis. Functionally, part of the energy-coupling factor (ECF) transporter complex CbiMNOQ involved in cobalt import. The protein is Cobalt transport protein CbiM of Clostridium tetani (strain Massachusetts / E88).